A 478-amino-acid polypeptide reads, in one-letter code: Glycogen synthase (478 aa).

Lys15 is a binding site for ADP-alpha-D-glucose.

It belongs to the glycosyltransferase 1 family. Bacterial/plant glycogen synthase subfamily.

It carries out the reaction [(1-&gt;4)-alpha-D-glucosyl](n) + ADP-alpha-D-glucose = [(1-&gt;4)-alpha-D-glucosyl](n+1) + ADP + H(+). It participates in glycan biosynthesis; glycogen biosynthesis. Its function is as follows. Synthesizes alpha-1,4-glucan chains using ADP-glucose. The sequence is that of Glycogen synthase from Acholeplasma laidlawii (strain PG-8A).